Reading from the N-terminus, the 62-residue chain is MVDYTQRPKSRFLRVKCNDCENEQIIFGSASRKITCVVCGRTLAEPTGGKSTITTHILEVLE.

Zn(2+) contacts are provided by cysteine 17, cysteine 20, cysteine 36, and cysteine 39. The C4-type zinc-finger motif lies at 17 to 39 (CNDCENEQIIFGSASRKITCVVC).

The protein belongs to the eukaryotic ribosomal protein eS27 family. Part of the 30S ribosomal subunit. Zn(2+) is required as a cofactor.

This is Small ribosomal subunit protein eS27 from Methanosarcina mazei (strain ATCC BAA-159 / DSM 3647 / Goe1 / Go1 / JCM 11833 / OCM 88) (Methanosarcina frisia).